The sequence spans 311 residues: Aspartate carbamoyltransferase catalytic subunit (311 aa).

Residues Arg59 and Thr60 each contribute to the carbamoyl phosphate site. Lys87 is an L-aspartate binding site. Arg109, His139, and Gln142 together coordinate carbamoyl phosphate. L-aspartate contacts are provided by Arg172 and Arg224. Ala265 and Pro266 together coordinate carbamoyl phosphate.

Belongs to the aspartate/ornithine carbamoyltransferase superfamily. ATCase family. As to quaternary structure, heterododecamer (2C3:3R2) of six catalytic PyrB chains organized as two trimers (C3), and six regulatory PyrI chains organized as three dimers (R2).

It catalyses the reaction carbamoyl phosphate + L-aspartate = N-carbamoyl-L-aspartate + phosphate + H(+). It participates in pyrimidine metabolism; UMP biosynthesis via de novo pathway; (S)-dihydroorotate from bicarbonate: step 2/3. Catalyzes the condensation of carbamoyl phosphate and aspartate to form carbamoyl aspartate and inorganic phosphate, the committed step in the de novo pyrimidine nucleotide biosynthesis pathway. This chain is Aspartate carbamoyltransferase catalytic subunit, found in Streptococcus equi subsp. zooepidemicus (strain MGCS10565).